The sequence spans 265 residues: Leucyl/phenylalanyl-tRNA--protein transferase (265 aa).

The interval Leu-244 to Pro-265 is disordered.

This sequence belongs to the L/F-transferase family.

Its subcellular location is the cytoplasm. The catalysed reaction is N-terminal L-lysyl-[protein] + L-leucyl-tRNA(Leu) = N-terminal L-leucyl-L-lysyl-[protein] + tRNA(Leu) + H(+). It catalyses the reaction N-terminal L-arginyl-[protein] + L-leucyl-tRNA(Leu) = N-terminal L-leucyl-L-arginyl-[protein] + tRNA(Leu) + H(+). It carries out the reaction L-phenylalanyl-tRNA(Phe) + an N-terminal L-alpha-aminoacyl-[protein] = an N-terminal L-phenylalanyl-L-alpha-aminoacyl-[protein] + tRNA(Phe). In terms of biological role, functions in the N-end rule pathway of protein degradation where it conjugates Leu, Phe and, less efficiently, Met from aminoacyl-tRNAs to the N-termini of proteins containing an N-terminal arginine or lysine. The sequence is that of Leucyl/phenylalanyl-tRNA--protein transferase from Methylibium petroleiphilum (strain ATCC BAA-1232 / LMG 22953 / PM1).